The following is a 103-amino-acid chain: Large ribosomal subunit protein bL21 (103 aa).

This sequence belongs to the bacterial ribosomal protein bL21 family. Part of the 50S ribosomal subunit. Contacts protein L20.

This protein binds to 23S rRNA in the presence of protein L20. In Cupriavidus metallidurans (strain ATCC 43123 / DSM 2839 / NBRC 102507 / CH34) (Ralstonia metallidurans), this protein is Large ribosomal subunit protein bL21.